Reading from the N-terminus, the 209-residue chain is Large ribosomal subunit protein uL3 (209 aa).

Position 150 is an N5-methylglutamine (glutamine 150).

The protein belongs to the universal ribosomal protein uL3 family. Part of the 50S ribosomal subunit. Forms a cluster with proteins L14 and L19. In terms of processing, methylated by PrmB.

Its function is as follows. One of the primary rRNA binding proteins, it binds directly near the 3'-end of the 23S rRNA, where it nucleates assembly of the 50S subunit. In Vibrio vulnificus (strain CMCP6), this protein is Large ribosomal subunit protein uL3.